The following is a 957-amino-acid chain: Calsyntenin-3 (957 aa).

The signal sequence occupies residues 1–19; it reads MTLLLVSLLLASLLQISSG. Topologically, residues 1–21 are cytoplasmic; that stretch reads MTLLLVSLLLASLLQISSGNK. Topologically, residues 20-848 are extracellular; the sequence is NKANKHKPWI…SHRNSMVPSA (829 aa). The helical intramembrane region spans 22–42; the sequence is ANKHKPWIEAEYQGIVMENDN. Cadherin domains lie at 29-145 and 146-246; these read IEAE…APVF and VERL…KPSW. Residues 43 to 73 are Cytoplasmic-facing; it reads TVLLNPPLFALDKDAPLRYAGEICGFRLHGS. Positions 74-94 form an intramembrane region, helical; sequence GVPFKAVILDKATGEGLIRAK. At 95–139 the chain is on the cytoplasmic side; it reads EPVDCEAQKEHTFTTQAYDCVDGPDGANTKKSHKATVHVRVNDVN. An intramembrane region (helical) is located at residues 140–160; it reads EFAPVFVERLYRAAVTEGKLY. Residues 161 to 248 are Cytoplasmic-facing; that stretch reads DRILRVEAID…KPTCKPSWQG (88 aa). Residues 249-269 traverse the membrane as a helical segment; the sequence is WNKRIEYAPGAGSLALFPGIR. Over 270-357 the chain is Lumenal; the sequence is LETCDEPLWN…GTQAVQVPLG (88 aa). N-linked (GlcNAc...) asparagine glycans are attached at residues Asn-299, Asn-327, Asn-347, Asn-508, and Asn-741. A helical transmembrane segment spans residues 849–869; that stretch reads ATLIIVVCVGFLVLMVILGLV. The Cytoplasmic segment spans residues 870 to 957; that stretch reads RIHSLHRRVS…RIIESPPHRY (88 aa). The disordered stretch occupies residues 916–957; that stretch reads QQTGVAGVAGGQQEEEDSSDSEAADSPSSDERRIIESPPHRY. Residues 928–938 are compositionally biased toward acidic residues; it reads QEEEDSSDSEA. Basic and acidic residues predominate over residues 944–957; it reads SDERRIIESPPHRY.

It belongs to the calsyntenin family. Interacts (via cadherin domains) with both alpha and beta isoforms of neurexins (NRXN1, NRXN2 and NRXN3). Directly interacts with APBA2. Forms a tripartite complex with APBA2 and APP. Interacts with low affinity with KLC1. Interacts with SLC23A2/SVCT2. In terms of assembly, interacts with CIDEA; inhibiting the lipid transferase activity of CIDEA. Interacts with CIDEC; inhibiting the lipid transferase activity of CIDEC. Proteolytically processed under normal cellular conditions. A primary zeta-cleavage generates a large extracellular (soluble) N-terminal domain (sAlc) and a short C-terminal transmembrane fragment (CTF1). A secondary cleavage catalyzed by gamma-secretase within the transmembrane domain releases the beta-Alc-beta chain in the extracellular milieu and produces an intracellular fragment (AlcICD). This processing is strongly suppressed in the tripartite complex formed with APBA2 and APP, which seems to prevent the association with gamma-secretase. Post-translationally, ubiquitinated: endoplasmic reticulum-localized protein is ubiquitinated and degraded by the endoplasmic reticulum-associated degradation (ERAD) pathway.

The protein localises to the postsynaptic cell membrane. Its subcellular location is the endoplasmic reticulum membrane. The protein resides in the golgi apparatus membrane. It is found in the cell projection. It localises to the dendrite. The protein localises to the lipid droplet. In terms of biological role, postsynaptic adhesion molecule that binds to presynaptic neurexins to mediate both excitatory and inhibitory synapse formation. Promotes synapse development by acting as a cell adhesion molecule at the postsynaptic membrane, which associates with both neurexin-alpha and neurexin-beta proteins at the presynaptic membrane. Regulates the balance between excitatory and inhibitory synapses by inhibiting formation of excitatory parallel-fiber synapses and promoting formation of inhibitory synapses in the same neuron. May also be involved in ascorbate (vitamin C) uptake via its interaction with SLC23A2/SVCT2. Complex formation with APBA2 and APP, stabilizes APP metabolism and enhances APBA2-mediated suppression of beta-APP40 secretion, due to the retardation of intracellular APP maturation. Its function is as follows. Adipose-specific isoform that plays a key role in adaptive thermogenesis. Facilitates the efficient use of stored triglyceride by promoting multilocular morphology of thermogenic adipocytes: acts by inhibiting the activity of CIDEA and CIDEC on lipid droplets, thereby preventing lipid droplet fusion and facilitating lipid utilization. May also participate in adaptive thermogenesis by promoting sympathetic innervation of thermogenic adipose tissue: acts by driving secretion of neurotrophic factor S100B from brown adipocytes, stimulating neurite outgrowth from sympathetic neurons. The protein is Calsyntenin-3 of Rattus norvegicus (Rat).